The primary structure comprises 683 residues: Leucine-rich repeat and calponin homology domain-containing protein 4 (683 aa).

Low complexity predominate over residues 1 to 18; the sequence is MAAAVAAPLAAGGEEAAA. Residues 1 to 34 form a disordered region; that stretch reads MAAAVAAPLAAGGEEAAATTSVPGSPGLPGRRSA. LRR repeat units follow at residues 41–64, 67–90, 92–113, 114–136, 138–158, 159–181, 182–204, 206–226, and 227–250; these read AVAT…AARS, LSDI…ACQL, SLEG…LGNL, TALT…ICQL, LRVL…IGTL, GSLR…LCGL, SSLR…LGDL, LVRL…FCRL, and RHLQ…CLKG. Residues 268-292 form a disordered region; that stretch reads ALGDLAPSRPPSFSPCPAEDLFPGH. Residues S279, S281, S304, S307, S309, and S313 each carry the phosphoserine modification. Disordered regions lie at residues 326–436 and 449–539; these read FRIS…LLKP and STQA…DEKD. 3 stretches are compositionally biased toward basic and acidic residues: residues 330-345, 357-376, and 384-418; these read ELAR…KEDG, IDSH…EQRP, and GDRE…ERRQ. S432 and S457 each carry phosphoserine. Residues 449–460 show a composition bias toward polar residues; that stretch reads STQAMHNGSPKS. Composition is skewed to low complexity over residues 461 to 481 and 511 to 524; these read SASQ…PASQ and SSSQ…SPDS. Phosphoserine is present on residues S511, S513, S517, S521, and S589. The Calponin-homology (CH) domain maps to 534-647; sequence VPDEKDLMTQ…ALEAVKRVGG (114 aa). Residues 653–673 traverse the membrane as a helical segment; that stretch reads LWPPSGLGGFVVFYVVLMLLL.

The protein resides in the cell membrane. Its function is as follows. Accessory protein that regulates signaling by multiple TLRs, acting as a broad-spanning regulator of the innate immune response. In macrophages, binds LPS and promotes proper docking of LPS in lipid raft membrane. May be required for lipid raft maintenance. The polypeptide is Leucine-rich repeat and calponin homology domain-containing protein 4 (Homo sapiens (Human)).